The chain runs to 202 residues: Probable septum site-determining protein MinC (202 aa).

The protein belongs to the MinC family. Interacts with MinD and FtsZ.

Functionally, cell division inhibitor that blocks the formation of polar Z ring septums. Rapidly oscillates between the poles of the cell to destabilize FtsZ filaments that have formed before they mature into polar Z rings. Prevents FtsZ polymerization. The protein is Probable septum site-determining protein MinC of Sulfurihydrogenibium sp. (strain YO3AOP1).